Consider the following 443-residue polypeptide: MPKSGRDGGASKDSKYDLSKISARVDRVNVSGLLRTHNDYVMRAADGLFKASNFQDLMLEAMSTKSYLHELGIFKDVSVHIDVSRGADASPQGYEVTFKGNEMSRMMGSAGTEIGQNEGSLRTELTIPNILGRGENISLQGSYSSTRANDLQLKFWKPFFHTRFKENRPEMSFSIFRQTDRFDISSFQTTNIGYLVDFSAHTMVGVDLTHSLQYENAIRDVGLLNKSVPFAIRDHCGPKLASLLRYSVVYDNRDGNVFPTRGIYLKSVNEYCGLGGNVAYTSSTAHGELNVPLFAGLVAQFCARVGVVKETKNTTQLPISSLFYCGGPLTLRGFKFGGAGPVVESTPIGAQSFWCTGAHLWAPLPFAGVFKNLASHFRMHFFYNIGNNNSFSTENMRSAFGMGLAVKLAERARIELNYCVPVRHQDTDRILNGFQFGIGYEFV.

One can recognise a POTRA domain in the interval 23–101; the sequence is ARVDRVNVSG…QGYEVTFKGN (79 aa).

The protein belongs to the SAM50/omp85 family. As to quaternary structure, associates with the mitochondrial contact site and cristae organizing system (MICOS) complex (also known as MINOS or MitOS complex).

The protein localises to the mitochondrion outer membrane. Functionally, may play a role in the maintenance of the structure of mitochondrial cristae. The chain is SAM50-like protein CG7639 from Drosophila melanogaster (Fruit fly).